The primary structure comprises 318 residues: Deacetoxycephalosporin C hydroxylase (318 aa).

In terms of domain architecture, Fe2OG dioxygenase spans 158-271; that stretch reads DADPVLRLRY…RTSSVFFLRP (114 aa).

It belongs to the iron/ascorbate-dependent oxidoreductase family. As to quaternary structure, monomer. Fe cation is required as a cofactor.

The enzyme catalyses deacetoxycephalosporin C + 2-oxoglutarate + O2 = deacetylcephalosporin C + succinate + CO2. It participates in antibiotic biosynthesis; cephalosporin C biosynthesis. Functionally, hydroxylation of desacetoxicephalosporin C in 3'position to form deacetylcephalosporin C. In Streptomyces clavuligerus, this protein is Deacetoxycephalosporin C hydroxylase (cefF).